We begin with the raw amino-acid sequence, 297 residues long: Small ribosomal subunit biogenesis GTPase RsgA (297 aa).

A CP-type G domain is found at 65–223; that stretch reads TNEIGRPAVA…IADTPGFSAI (159 aa). GTP contacts are provided by residues 114-117 and 166-174; these read SKAD and GQSGAGKST. Zn(2+) is bound by residues C247, C252, H254, and C260.

The protein belongs to the TRAFAC class YlqF/YawG GTPase family. RsgA subfamily. As to quaternary structure, monomer. Associates with 30S ribosomal subunit, binds 16S rRNA. It depends on Zn(2+) as a cofactor.

It localises to the cytoplasm. Its function is as follows. One of several proteins that assist in the late maturation steps of the functional core of the 30S ribosomal subunit. Helps release RbfA from mature subunits. May play a role in the assembly of ribosomal proteins into the subunit. Circularly permuted GTPase that catalyzes slow GTP hydrolysis, GTPase activity is stimulated by the 30S ribosomal subunit. The polypeptide is Small ribosomal subunit biogenesis GTPase RsgA (Lactobacillus gasseri (strain ATCC 33323 / DSM 20243 / BCRC 14619 / CIP 102991 / JCM 1131 / KCTC 3163 / NCIMB 11718 / NCTC 13722 / AM63)).